A 136-amino-acid chain; its full sequence is Small ribosomal subunit protein uS9 (136 aa).

This sequence belongs to the universal ribosomal protein uS9 family.

The protein is Small ribosomal subunit protein uS9 of Synechococcus sp. (strain JA-2-3B'a(2-13)) (Cyanobacteria bacterium Yellowstone B-Prime).